The following is a 310-amino-acid chain: Ribosome production factor 2 homolog (310 aa).

The Brix domain maps to 29-239 (KKTLILHGTK…VRRHRYPVES (211 aa)). The disordered stretch occupies residues 281 to 310 (LSNDVKGLKRERREAKKNKDHSKKQKINPE). The segment covering 295–310 (AKKNKDHSKKQKINPE) has biased composition (basic residues).

The protein belongs to the RPF2 family.

It is found in the nucleus. The protein localises to the nucleolus. The protein is Ribosome production factor 2 homolog of Oryza sativa subsp. japonica (Rice).